The primary structure comprises 132 residues: Small ribosomal subunit protein uS8 (132 aa).

This sequence belongs to the universal ribosomal protein uS8 family. As to quaternary structure, part of the 30S ribosomal subunit. Contacts proteins S5 and S12.

One of the primary rRNA binding proteins, it binds directly to 16S rRNA central domain where it helps coordinate assembly of the platform of the 30S subunit. In Rickettsia massiliae (strain Mtu5), this protein is Small ribosomal subunit protein uS8.